The following is a 155-amino-acid chain: Small ribosomal subunit protein uS7 (155 aa).

Belongs to the universal ribosomal protein uS7 family. In terms of assembly, part of the 30S ribosomal subunit. Contacts proteins S9 and S11.

Functionally, one of the primary rRNA binding proteins, it binds directly to 16S rRNA where it nucleates assembly of the head domain of the 30S subunit. Is located at the subunit interface close to the decoding center, probably blocks exit of the E-site tRNA. This is Small ribosomal subunit protein uS7 from Sulfurovum sp. (strain NBC37-1).